Here is a 45-residue protein sequence, read N- to C-terminus: Protamine Z2 (45 aa).

The span at M1 to K23 shows a compositional bias: basic residues. Residues M1–S26 are disordered.

As to expression, testis.

Its subcellular location is the nucleus. It localises to the chromosome. Its function is as follows. Protamines substitute for histones in the chromatin of sperm during the haploid phase of spermatogenesis. They compact sperm DNA into a highly condensed, stable and inactive complex. The polypeptide is Protamine Z2 (Scyliorhinus canicula (Small-spotted catshark)).